Here is a 108-residue protein sequence, read N- to C-terminus: Guanine nucleotide-binding protein subunit gamma (108 aa).

Residue Cys-104 is the site of S-palmitoyl cysteine attachment. Cys-105 carries the cysteine methyl ester modification. The S-farnesyl cysteine moiety is linked to residue Cys-105. Positions Val-106 to Ser-108 are cleaved as a propeptide — removed in mature form.

It belongs to the G protein gamma family. As to quaternary structure, g proteins are composed of 3 units, alpha, beta and gamma.

It localises to the membrane. The sequence is that of Guanine nucleotide-binding protein subunit gamma from Yarrowia lipolytica (strain CLIB 122 / E 150) (Yeast).